The chain runs to 308 residues: Uricase (308 aa).

Active-site charge relay system residues include Lys5 and Thr65. Residues Thr65, Asp66, Phe177, Arg194, Ile242, Gln243, and Asn269 each coordinate urate. The disordered stretch occupies residues 283-308 (ASVLREPPAPTGFQQFSMDRGDLDEQ).

It belongs to the uricase family.

It carries out the reaction urate + O2 + H2O = 5-hydroxyisourate + H2O2. It functions in the pathway purine metabolism; urate degradation; (S)-allantoin from urate: step 1/3. Its function is as follows. Catalyzes the oxidation of uric acid to 5-hydroxyisourate, which is further processed to form (S)-allantoin. The chain is Uricase from Haloferax volcanii (strain ATCC 29605 / DSM 3757 / JCM 8879 / NBRC 14742 / NCIMB 2012 / VKM B-1768 / DS2) (Halobacterium volcanii).